The sequence spans 324 residues: Ribonucleoside-diphosphate reductase subunit beta nrdF2 (324 aa).

Fe cation is bound by residues Glu-103 and His-106. The active site involves Tyr-110. The Fe cation site is built by Glu-163, Glu-197, and His-200.

The protein belongs to the ribonucleoside diphosphate reductase small chain family. In terms of assembly, tetramer of two alpha and two beta subunits. Requires Fe cation as cofactor.

The catalysed reaction is a 2'-deoxyribonucleoside 5'-diphosphate + [thioredoxin]-disulfide + H2O = a ribonucleoside 5'-diphosphate + [thioredoxin]-dithiol. Provides the precursors necessary for DNA synthesis. Catalyzes the biosynthesis of deoxyribonucleotides from the corresponding ribonucleotides. The chain is Ribonucleoside-diphosphate reductase subunit beta nrdF2 (nrdF2) from Mycobacterium tuberculosis (strain CDC 1551 / Oshkosh).